The following is a 145-amino-acid chain: uncharacterized protein (145 aa).

Positions 1–25 are disordered; sequence MSENNENDGFNLDPDVKEELEETKS. The segment covering 14–25 has biased composition (basic and acidic residues); that stretch reads PDVKEELEETKS.

This is an uncharacterized protein from His1 virus (isolate Australia/Victoria) (His1V).